A 154-amino-acid polypeptide reads, in one-letter code: uncharacterized protein (154 aa).

Phosphoserine is present on Ser47.

The protein to yeast YPL229w.

This is an uncharacterized protein from Saccharomyces cerevisiae (strain ATCC 204508 / S288c) (Baker's yeast).